Reading from the N-terminus, the 122-residue chain is MRHRNTGRYLGRNSSHRDSMLKNMIISLIRYEIIHTTLQKAKELRKILEPLITISKINSISNRRNIYSKIRNNEIIHKLFNDIGPRFLKKNGGYLSILKSGYRKGDNAYMAYIKFTNTKKNI.

This sequence belongs to the bacterial ribosomal protein bL17 family. In terms of assembly, part of the 50S ribosomal subunit. Contacts protein L32.

This is Large ribosomal subunit protein bL17 from Wigglesworthia glossinidia brevipalpis.